The following is an 813-amino-acid chain: G-type lectin S-receptor-like serine/threonine-protein kinase LECRK1 (813 aa).

Positions 1 to 19 are cleaved as a signal peptide; it reads MVALLLFPMLLQLLSPTCA. The Extracellular segment spans residues 20–466; sequence QTQKNITLGS…NRKHWVLGSS (447 aa). A Bulb-type lectin domain is found at 22 to 149; sequence QKNITLGSTL…DGTTKWQTFD (128 aa). 6 N-linked (GlcNAc...) asparagine glycosylation sites follow: Asn24, Asn57, Asn164, Asn168, Asn219, and Asn242. Positions 293 to 346 constitute an EGF-like; atypical domain; sequence PQNICHAIVSDVGSGVCGFNSYCTFDGTRNQIASCQCPPWYKFFDEQKKYKGCK. 5 disulfide bridges follow: Cys297–Cys315, Cys309–Cys327, Cys329–Cys345, Cys391–Cys413, and Cys395–Cys401. The region spanning 354–433 is the PAN domain; the sequence is CDLDEATALA…NMADYVQRTV (80 aa). N-linked (GlcNAc...) asparagine glycosylation is found at Asn407 and Asn441. Residues 467-487 traverse the membrane as a helical segment; sequence LILGTSILVNFALISIFLFGT. The Cytoplasmic segment spans residues 488–813; it reads YCRIATKKNI…DPCSFISSLP (326 aa). In terms of domain architecture, Protein kinase spans 523-797; the sequence is AGFHEILGAG…KVTQMLDGAV (275 aa). Residues 529 to 537 and Lys553 each bind ATP; that span reads LGAGASGVV. Asp647 (proton acceptor) is an active-site residue.

The protein belongs to the protein kinase superfamily. Ser/Thr protein kinase family.

It is found in the membrane. The enzyme catalyses L-seryl-[protein] + ATP = O-phospho-L-seryl-[protein] + ADP + H(+). The catalysed reaction is L-threonyl-[protein] + ATP = O-phospho-L-threonyl-[protein] + ADP + H(+). Involved in innate immunity. Required for the expression of defense-related genes PR1A, LOX2 and CHS1 upon biotic stresses. Required for basal resistance to the fungal blast (M.grisea), bacterial blight (X.oryzae pv. oryzae, Xoo) and the herbivorous insect brown planthopper (N.lugens, BPH). May be involved in several defense signaling pathways. Involved in the promotion of seed germination. Required for the expression of alpha-amylase genes during seed germination. Involved in resistance against the herbivorous insect brown planthopper (N.lugens, BPH). Member of the BPH3 (BPH resistance locus 3) cluster which contains LECRK1, LECRK2 and LECRK3. In Oryza sativa subsp. japonica (Rice), this protein is G-type lectin S-receptor-like serine/threonine-protein kinase LECRK1.